A 597-amino-acid chain; its full sequence is Cytosolic Fe-S cluster assembly factor nar1 (597 aa).

Cys20 is a binding site for [4Fe-4S] cluster. The disordered stretch occupies residues 25–46 (ESLPQKESQSENPYEVTKEDKV). [4Fe-4S] cluster-binding residues include Cys61, Cys64, Cys67, Cys208, and Cys263. The interval 424–449 (RLPGAKPQAVSSSANRRQPMSRNAAP) is disordered. A compositionally biased stretch (polar residues) spans 432–444 (AVSSSANRRQPMS). Positions 464 and 468 each coordinate [4Fe-4S] cluster.

This sequence belongs to the NARF family.

Component of the cytosolic Fe/S protein assembly machinery. Required for maturation of extramitochondrial Fe/S proteins. May play a role in the transfer of pre-assembled Fe/S clusters to target apoproteins. This chain is Cytosolic Fe-S cluster assembly factor nar1 (nar1), found in Aspergillus fumigatus (strain ATCC MYA-4609 / CBS 101355 / FGSC A1100 / Af293) (Neosartorya fumigata).